A 362-amino-acid chain; its full sequence is Histidine biosynthesis bifunctional protein HisB (362 aa).

The histidinol-phosphatase stretch occupies residues 1 to 173 (MQPTLFIDRD…TVTNCGKRPP (173 aa)). The Nucleophile role is filled by D8. Mg(2+) is bound by residues D8 and D10. The active-site Proton donor is D10. Residues C91, H93, C99, and C101 each contribute to the Zn(2+) site. Mg(2+) is bound at residue D128. An imidazoleglycerol-phosphate dehydratase region spans residues 174-362 (RFAEVIRQTK…NEMPSSKGVL (189 aa)).

It in the N-terminal section; belongs to the histidinol-phosphatase family. This sequence in the C-terminal section; belongs to the imidazoleglycerol-phosphate dehydratase family. Mg(2+) is required as a cofactor. The cofactor is Zn(2+).

It is found in the cytoplasm. It catalyses the reaction D-erythro-1-(imidazol-4-yl)glycerol 3-phosphate = 3-(imidazol-4-yl)-2-oxopropyl phosphate + H2O. The catalysed reaction is L-histidinol phosphate + H2O = L-histidinol + phosphate. It functions in the pathway amino-acid biosynthesis; L-histidine biosynthesis; L-histidine from 5-phospho-alpha-D-ribose 1-diphosphate: step 6/9. The protein operates within amino-acid biosynthesis; L-histidine biosynthesis; L-histidine from 5-phospho-alpha-D-ribose 1-diphosphate: step 8/9. This Haemophilus influenzae (strain 86-028NP) protein is Histidine biosynthesis bifunctional protein HisB.